The primary structure comprises 967 residues: MANRNLEKLASIDAQLRLLVPGKVSEDDKLIEYDALLLDKFLDILQDLHGEDLKEAVQECYELSAEYEGKHDPKKLEELGSVLTSLDPGDSIVIAKAFSHMLNLANLAEEVQIAYRRRIKLKRGDFADEANATTESDIEETFKKLVLKLNKSPEEVFDALKNQTVDLVLTAHPTQSVRRSLLQKHGRIRNCLAQLYAKDITPDDKQELDEALHREIQAAFRTDEIRRTPPTPQDEMRAGMSYFHETIWKGVPKFLRRVDTALKNIGINERVPYNAPLIQFSSWMGGDRDGKHPRVTPEVTRDVCLLARMMASNMYFSQIEDLMFEMSMWRCNSELRVRAEELYRTARRDVKHYIEFWKQVPPTEPYRVILGDVRDKLYNTRERSRHLLAHGISDIPEEAVYTNVEQFLEPLELCYRSLCDCGDRVIADGSLLDFLRQVSTFGLSLVKLDIRQESDRHTDVLDAITQHLEIGSYREWSEEKRQEWLLAELSGKRPLFGSDLPKTEEVKDVLDTFNVLAELPSDCFGAYIISMATSPSDVLAVELLQRECHVKHPLRVVPLFEKLADLEAAPAAMARLFSIDWYRNRIDGKQEVMIGYSDSGKDAGRFSAAWQLYKAQEEIIKVAKEFGVKLVIFHGRGGTVGRGGGPTHLAILSQPPDTIHGSLRVTVQGEVIEQSFGEEHLCFRTLQRFCAATLEHGMNPPISPRPEWRELMDQMAVVATEEYRSIVFKEPRFVEYFRLATPELEYGRMNIGSRPSKRKPSGGIESLRAIPWIFAWTQTRFHLPVWLGFGAAFKHAIKKDSKNLQMLQEMYKTWPFFRVTIDLVEMVFAKGDPGIAALNDKLLVSEDLWPFGESLRANYEETKDYLLKIAGHRDLLEGDPYLKQRIRLRDSYITTLNVCQAYTLKRIRDPNYHVTLRPHISKEYAAEPSKPADELIHLNPTSEYAPGLEDTLILTMKGIAAGMQNTG.

The residue at position 11 (Ser-11) is a Phosphoserine. Catalysis depends on residues His-172 and Lys-601.

The protein belongs to the PEPCase type 1 family. Homotetramer. It depends on Mg(2+) as a cofactor.

It is found in the cytoplasm. It carries out the reaction oxaloacetate + phosphate = phosphoenolpyruvate + hydrogencarbonate. Its pathway is photosynthesis; C3 acid pathway. By light-reversible phosphorylation. Its function is as follows. Through the carboxylation of phosphoenolpyruvate (PEP) it forms oxaloacetate, a four-carbon dicarboxylic acid source for the tricarboxylic acid cycle. In Flaveria pringlei, this protein is Phosphoenolpyruvate carboxylase (PPCA1).